Consider the following 244-residue polypeptide: MPDMSQLKELPFSTLQFYATAPYPCSYLPGRQARSQVAAPGHLINTGTYSQLVEQGFRRSGLFTYRPHCDNCHACVPVRVDAARFEPNRTQRRAWRSHQALRAFVAELAWSPEHYDLYTRYQQGRHPGGGMDEDSRTQYAQFLLTTRVNTRLVKFRTPQGQLAMISIIDVLDDGLSSVYTFYDPDMAGSLGTYSILWQIEQCRTLDLPWLYLGYWIADSRKMAYKANFRPLQMHVDGAWRETPP.

The protein belongs to the R-transferase family. Bpt subfamily.

It localises to the cytoplasm. The catalysed reaction is N-terminal L-glutamyl-[protein] + L-leucyl-tRNA(Leu) = N-terminal L-leucyl-L-glutamyl-[protein] + tRNA(Leu) + H(+). It carries out the reaction N-terminal L-aspartyl-[protein] + L-leucyl-tRNA(Leu) = N-terminal L-leucyl-L-aspartyl-[protein] + tRNA(Leu) + H(+). Its function is as follows. Functions in the N-end rule pathway of protein degradation where it conjugates Leu from its aminoacyl-tRNA to the N-termini of proteins containing an N-terminal aspartate or glutamate. The polypeptide is Aspartate/glutamate leucyltransferase (Bordetella parapertussis (strain 12822 / ATCC BAA-587 / NCTC 13253)).